The following is a 401-amino-acid chain: Lsg locus putative protein 1 (401 aa).

The next 11 membrane-spanning stretches (helical) occupy residues 8 to 28, 36 to 56, 87 to 107, 132 to 152, 162 to 182, 199 to 219, 237 to 257, 282 to 302, 320 to 340, 352 to 372, and 374 to 394; these read VIYLVGELSSKLVPFLLLPYL, GYGSLSYYQTFLSLFLIVVSL, IIGSIILIGCWIAQSEILFYA, SYAFIQFSLTVTGAVFTVALL, KRILAILLSNLVVWFFSYFLY, ALFYILGFGLPLILHYASFFL, LGLYAMGAQLALVVSIAIQAL, WALFSFLLIPIPALIMWIIPE, FILFLISTTLSIPYLILVNYL, CSVLSTIIYVASLVALTFTEI, and YIPYAGIIGSLSIIPILYFMT.

The protein belongs to the polysaccharide synthase family. HI_0867/HI_1700 subfamily.

Its subcellular location is the cell membrane. The polypeptide is Lsg locus putative protein 1 (Haemophilus influenzae (strain ATCC 51907 / DSM 11121 / KW20 / Rd)).